We begin with the raw amino-acid sequence, 152 residues long: Aspartate carbamoyltransferase regulatory chain (152 aa).

Zn(2+) contacts are provided by C108, C113, C137, and C140.

The protein belongs to the PyrI family. As to quaternary structure, contains catalytic and regulatory chains. Zn(2+) is required as a cofactor.

Involved in allosteric regulation of aspartate carbamoyltransferase. This is Aspartate carbamoyltransferase regulatory chain from Neisseria gonorrhoeae (strain ATCC 700825 / FA 1090).